Reading from the N-terminus, the 33-residue chain is RPFRKHGAVPLSTYMRIYKKGDIVDIKGMGTIQ.

Belongs to the eukaryotic ribosomal protein eL21 family. In terms of assembly, component of the large ribosomal subunit.

It localises to the cytoplasm. Its subcellular location is the cytosol. The protein localises to the endoplasmic reticulum. Functionally, component of the large ribosomal subunit. The ribosome is a large ribonucleoprotein complex responsible for the synthesis of proteins in the cell. The chain is Large ribosomal subunit protein eL21 (rpl21) from Xenopus laevis (African clawed frog).